A 28-amino-acid chain; its full sequence is Somatostatin-2 (28 aa).

Cys17 and Cys28 are joined by a disulfide.

It belongs to the somatostatin family.

The protein resides in the secreted. Functionally, somatostatin inhibits the release of somatotropin. This is Somatostatin-2 (sst2) from Oreochromis niloticus (Nile tilapia).